The primary structure comprises 298 residues: Myozenin-1 (298 aa).

A disordered region spans residues 1–34 (MPLSGTPAPNKKRKSSKLIMELTGGGQESSGLNL). The residue at position 82 (serine 82) is a Phosphoserine. A disordered region spans residues 105–173 (FSYSKGSSGG…TGTGDQAGGE (69 aa)). A compositionally biased stretch (low complexity) spans 118–129 (GSSSAGQYGSGQ). Residues 136-172 (SGSGSGGAGGPGSQTGRGGDAGTTGVGETGTGDQAGG) are compositionally biased toward gly residues.

This sequence belongs to the myozenin family. As to quaternary structure, interacts with ACTN2, ACTN3, FLNA, FLNB, FLNC, LDB3, PPP3CA and TCAP. Interacts via its C-terminal region with MYOT.

The protein resides in the nucleus. It is found in the cell projection. Its subcellular location is the pseudopodium. Functionally, myozenins may serve as intracellular binding proteins involved in linking Z-disk proteins such as alpha-actinin, gamma-filamin, TCAP/telethonin, LDB3/ZASP and localizing calcineurin signaling to the sarcomere. Plays an important role in the modulation of calcineurin signaling. May play a role in myofibrillogenesis. This is Myozenin-1 (MYOZ1) from Sus scrofa (Pig).